A 176-amino-acid polypeptide reads, in one-letter code: Ribosome maturation factor RimM (176 aa).

Residues 99-173 (ADEYYWHDLL…TMTITPLEGL (75 aa)) form the PRC barrel domain.

It belongs to the RimM family. As to quaternary structure, binds ribosomal protein uS19.

It localises to the cytoplasm. In terms of biological role, an accessory protein needed during the final step in the assembly of 30S ribosomal subunit, possibly for assembly of the head region. Essential for efficient processing of 16S rRNA. May be needed both before and after RbfA during the maturation of 16S rRNA. It has affinity for free ribosomal 30S subunits but not for 70S ribosomes. This is Ribosome maturation factor RimM from Trichlorobacter lovleyi (strain ATCC BAA-1151 / DSM 17278 / SZ) (Geobacter lovleyi).